We begin with the raw amino-acid sequence, 147 residues long: Hemoglobin subunit epsilon (147 aa).

Residues 3–147 form the Globin domain; sequence HFTAEEKAAV…VAIALAHKYH (145 aa). Residues serine 14 and serine 51 each carry the phosphoserine modification. Residues histidine 64 and histidine 93 each contribute to the heme b site.

Belongs to the globin family. As to quaternary structure, heterotetramer of two alpha chains and two epsilon chains in early embryonic hemoglobin Gower-2; two zeta chains and two epsilon chains in early embryonic hemoglobin Gower-1. As to expression, red blood cells.

In terms of biological role, the epsilon chain is a beta-type chain of early mammalian embryonic hemoglobin. The protein is Hemoglobin subunit epsilon (HBE1) of Pongo pygmaeus (Bornean orangutan).